The following is a 260-amino-acid chain: (+)-borneol dehydrogenase 1 (260 aa).

NAD(+) contacts are provided by residues 20 to 26 (GGASGIG), D44, 67 to 68 (DV), and 94 to 96 (NAG). The active-site Proton donor is the S148. Residues Y161, K165, and T196 each coordinate NAD(+). Y161 acts as the Proton acceptor in catalysis. The Proton donor/acceptor role is filled by K165.

It belongs to the short-chain dehydrogenases/reductases (SDR) family.

The catalysed reaction is (1R,2S,4R)-borneol + NAD(+) = (1R,4R)-camphor + NADH + H(+). In terms of biological role, involved in the biosynthesis of monoterpene natural products related to camphor. Catalayzes the oxidation of (+)-borneol to (+)-camphor. Shows absolute selectivity towards (+)-borneol. Catalyzes the oxidation of (+)-isoborneol to (-)-camphor. Shows absolute selectivity towards (+)-isoborneol. This chain is (+)-borneol dehydrogenase 1, found in Salvia officinalis (Sage).